Reading from the N-terminus, the 227-residue chain is Ribonuclease 3 (227 aa).

The region spanning 6-128 is the RNase III domain; sequence ASDYQQRIGY…VIAAIYLDAD (123 aa). E41 is a binding site for Mg(2+). D45 is an active-site residue. The Mg(2+) site is built by D114 and E117. Residue E117 is part of the active site. The DRBM domain maps to 155–225; that stretch reads DPKTRLQEWL…ASHAIDQLDS (71 aa). Residues 203 to 212 are compositionally biased toward basic and acidic residues; that stretch reads GEGSSRRLAE. The disordered stretch occupies residues 203 to 227; sequence GEGSSRRLAEQDAASHAIDQLDSNK.

This sequence belongs to the ribonuclease III family. As to quaternary structure, homodimer. The cofactor is Mg(2+).

The protein resides in the cytoplasm. It carries out the reaction Endonucleolytic cleavage to 5'-phosphomonoester.. Digests double-stranded RNA. Involved in the processing of primary rRNA transcript to yield the immediate precursors to the large and small rRNAs (23S and 16S). Processes some mRNAs, and tRNAs when they are encoded in the rRNA operon. Processes pre-crRNA and tracrRNA of type II CRISPR loci if present in the organism. This Xylella fastidiosa (strain 9a5c) protein is Ribonuclease 3.